The primary structure comprises 216 residues: uncharacterized protein (216 aa).

The region spanning 18 to 47 is the 4Fe-4S ferredoxin-type domain; that stretch reads PPDSPIEDRCGSCNICVDSCPTGALVQGGQ. Residues Cys-27, Cys-30, Cys-33, Cys-37, Cys-79, Cys-82, and Cys-86 each coordinate [4Fe-4S] cluster.

This is an uncharacterized protein from Geobacillus stearothermophilus (Bacillus stearothermophilus).